The chain runs to 101 residues: Replication restart protein PriB (101 aa).

The 101-residue stretch at 1 to 101 folds into the SSB domain; that stretch reads MTTNNLVLAG…LHAENVELKT (101 aa).

This sequence belongs to the PriB family. In terms of assembly, homodimer. Interacts with PriA and DnaT. Component of the replication restart primosome. Primosome assembly occurs via a 'hand-off' mechanism. PriA binds to replication forks, subsequently PriB then DnaT bind; DnaT then displaces ssDNA to generate the helicase loading substrate.

Its function is as follows. Involved in the restart of stalled replication forks, which reloads the replicative helicase on sites other than the origin of replication; the PriA-PriB pathway is the major replication restart pathway. During primosome assembly it facilitates complex formation between PriA and DnaT on DNA; stabilizes PriA on DNA. Stimulates the DNA unwinding activity of PriA helicase. This chain is Replication restart protein PriB, found in Shewanella halifaxensis (strain HAW-EB4).